The following is a 654-amino-acid chain: Acetyl-coenzyme A synthetase (654 aa).

Residues Arg190 to Lys193 and Thr313 contribute to the CoA site. ATP contacts are provided by residues Gly389–Pro391, Asp413–Thr418, Asp504, and Arg519. Ser527 contributes to the CoA binding site. Residue Arg530 coordinates ATP. Positions 541 and 546 each coordinate Mg(2+). Lys613 is modified (N6-acetyllysine).

Belongs to the ATP-dependent AMP-binding enzyme family. Mg(2+) is required as a cofactor. Acetylated. Deacetylation by the SIR2-homolog deacetylase activates the enzyme.

It catalyses the reaction acetate + ATP + CoA = acetyl-CoA + AMP + diphosphate. Its function is as follows. Catalyzes the conversion of acetate into acetyl-CoA (AcCoA), an essential intermediate at the junction of anabolic and catabolic pathways. AcsA undergoes a two-step reaction. In the first half reaction, AcsA combines acetate with ATP to form acetyl-adenylate (AcAMP) intermediate. In the second half reaction, it can then transfer the acetyl group from AcAMP to the sulfhydryl group of CoA, forming the product AcCoA. The sequence is that of Acetyl-coenzyme A synthetase from Leptospira borgpetersenii serovar Hardjo-bovis (strain JB197).